The chain runs to 164 residues: Putative 4-hydroxy-4-methyl-2-oxoglutarate aldolase (164 aa).

Residues 79–82 (GDRL) and Arg101 contribute to the substrate site. Asp102 lines the a divalent metal cation pocket.

The protein belongs to the class II aldolase/RraA-like family. Homotrimer. The cofactor is a divalent metal cation.

It carries out the reaction 4-hydroxy-4-methyl-2-oxoglutarate = 2 pyruvate. The catalysed reaction is oxaloacetate + H(+) = pyruvate + CO2. Its function is as follows. Catalyzes the aldol cleavage of 4-hydroxy-4-methyl-2-oxoglutarate (HMG) into 2 molecules of pyruvate. Also contains a secondary oxaloacetate (OAA) decarboxylase activity due to the common pyruvate enolate transition state formed following C-C bond cleavage in the retro-aldol and decarboxylation reactions. This Halorhodospira halophila (strain DSM 244 / SL1) (Ectothiorhodospira halophila (strain DSM 244 / SL1)) protein is Putative 4-hydroxy-4-methyl-2-oxoglutarate aldolase.